Reading from the N-terminus, the 132-residue chain is Small ribosomal subunit protein uS8 (132 aa).

The protein belongs to the universal ribosomal protein uS8 family. Part of the 30S ribosomal subunit. Contacts proteins S5 and S12.

Functionally, one of the primary rRNA binding proteins, it binds directly to 16S rRNA central domain where it helps coordinate assembly of the platform of the 30S subunit. This Roseiflexus castenholzii (strain DSM 13941 / HLO8) protein is Small ribosomal subunit protein uS8.